An 86-amino-acid polypeptide reads, in one-letter code: Putative membrane protein insertion efficiency factor (86 aa).

The protein belongs to the UPF0161 family.

It is found in the cell inner membrane. Its function is as follows. Could be involved in insertion of integral membrane proteins into the membrane. In Ruegeria sp. (strain TM1040) (Silicibacter sp.), this protein is Putative membrane protein insertion efficiency factor.